The primary structure comprises 483 residues: Aspartyl/glutamyl-tRNA(Asn/Gln) amidotransferase subunit B (483 aa).

It belongs to the GatB/GatE family. GatB subfamily. In terms of assembly, heterotrimer of A, B and C subunits.

It carries out the reaction L-glutamyl-tRNA(Gln) + L-glutamine + ATP + H2O = L-glutaminyl-tRNA(Gln) + L-glutamate + ADP + phosphate + H(+). The catalysed reaction is L-aspartyl-tRNA(Asn) + L-glutamine + ATP + H2O = L-asparaginyl-tRNA(Asn) + L-glutamate + ADP + phosphate + 2 H(+). Functionally, allows the formation of correctly charged Asn-tRNA(Asn) or Gln-tRNA(Gln) through the transamidation of misacylated Asp-tRNA(Asn) or Glu-tRNA(Gln) in organisms which lack either or both of asparaginyl-tRNA or glutaminyl-tRNA synthetases. The reaction takes place in the presence of glutamine and ATP through an activated phospho-Asp-tRNA(Asn) or phospho-Glu-tRNA(Gln). This Granulibacter bethesdensis (strain ATCC BAA-1260 / CGDNIH1) protein is Aspartyl/glutamyl-tRNA(Asn/Gln) amidotransferase subunit B.